The sequence spans 975 residues: Synaptopodin 2-like protein (975 aa).

The PDZ domain occupies 6-85; the sequence is EVQVTLAGGA…QLVLTVRRVT (80 aa). Disordered regions lie at residues 18–41, 86–214, and 314–349; these read GFRLQGGTEQRKPLQIRRRSQAGR, DEGS…PAEA, and AGTGTEEEDGIPPTSESELDEETFSDARSLTNQSDW. Ser105 and Ser108 each carry phosphoserine. Thr138 carries the phosphothreonine modification. A phosphoserine mark is found at Ser140, Ser163, Ser175, and Ser177. Residues 187–200 are compositionally biased toward polar residues; that stretch reads GSPSQGDSRVSSPS. The segment covering 202–214 has biased composition (low complexity); it reads EEGAALQPPPAEA. Over residues 339 to 349 the composition is skewed to polar residues; the sequence is DARSLTNQSDW. Ser342, Ser347, Ser371, Ser378, and Ser381 each carry phosphoserine. Omega-N-methylarginine is present on residues Arg383, Arg463, Arg466, and Arg476. Positions 491–649 are disordered; sequence KVNEGLGSTS…ETKNSPNPEL (159 aa). Positions 502 to 516 are enriched in pro residues; that stretch reads APSPFAAPPQGPTPL. Over residues 519 to 528 the composition is skewed to polar residues; the sequence is FTTVVPSHTP. Composition is skewed to low complexity over residues 530 to 540 and 571 to 580; these read SGASSSTQRSS and SAAAMTSTAS. 2 positions are modified to phosphoserine: Ser667 and Ser675. Residues 687–731 are disordered; it reads LGGRSYKTLPQVSPKTPPPMAPKTPPPTTPKTPPPVAPKPGSRGL. A compositionally biased stretch (pro residues) spans 701–724; that stretch reads KTPPPMAPKTPPPTTPKTPPPVAP. Residues Thr702 and Thr710 each carry the phosphothreonine modification. The residue at position 754 (Arg754) is an Omega-N-methylarginine. The tract at residues 772 to 797 is disordered; that stretch reads EATSGSSLNPGLRPRSPSPTPSLPPS. A phosphoserine mark is found at Ser787 and Ser789. Phosphothreonine is present on Thr791. Residues Arg805, Arg825, and Arg888 each carry the omega-N-methylarginine modification. Residue Ser890 is modified to Phosphoserine. Thr891 and Thr897 each carry phosphothreonine. Arg909 carries the omega-N-methylarginine modification. The residue at position 920 (Arg920) is an Asymmetric dimethylarginine; alternate. Residue Arg920 is modified to Omega-N-methylarginine; alternate. 2 positions are modified to omega-N-methylarginine: Arg953 and Arg955.

The protein belongs to the synaptopodin family.

It is found in the cytoplasm. The protein localises to the cytoskeleton. Its function is as follows. Actin-associated protein that may play a role in modulating actin-based shape. The polypeptide is Synaptopodin 2-like protein (Synpo2l) (Mus musculus (Mouse)).